The sequence spans 38 residues: Large ribosomal subunit protein bL36 (38 aa).

This sequence belongs to the bacterial ribosomal protein bL36 family.

The chain is Large ribosomal subunit protein bL36 from Hahella chejuensis (strain KCTC 2396).